Reading from the N-terminus, the 388-residue chain is Sulfate adenylyltransferase (388 aa).

Belongs to the sulfate adenylyltransferase family.

It catalyses the reaction sulfate + ATP + H(+) = adenosine 5'-phosphosulfate + diphosphate. It functions in the pathway sulfur metabolism; hydrogen sulfide biosynthesis; sulfite from sulfate: step 1/3. This Trichodesmium erythraeum (strain IMS101) protein is Sulfate adenylyltransferase.